Here is a 352-residue protein sequence, read N- to C-terminus: tRNA N6-adenosine threonylcarbamoyltransferase (352 aa).

The Fe cation site is built by His109 and His113. Substrate is bound by residues 136–140 (TVSGG), Asp169, Gly182, Asp186, and Asn284. Fe cation is bound at residue Asp312.

The protein belongs to the KAE1 / TsaD family. Requires Fe(2+) as cofactor.

The protein resides in the cytoplasm. The enzyme catalyses L-threonylcarbamoyladenylate + adenosine(37) in tRNA = N(6)-L-threonylcarbamoyladenosine(37) in tRNA + AMP + H(+). In terms of biological role, required for the formation of a threonylcarbamoyl group on adenosine at position 37 (t(6)A37) in tRNAs that read codons beginning with adenine. Is involved in the transfer of the threonylcarbamoyl moiety of threonylcarbamoyl-AMP (TC-AMP) to the N6 group of A37, together with TsaE and TsaB. TsaD likely plays a direct catalytic role in this reaction. The chain is tRNA N6-adenosine threonylcarbamoyltransferase from Chloroherpeton thalassium (strain ATCC 35110 / GB-78).